The following is a 754-amino-acid chain: Exocyst complex component EXO84A (754 aa).

Disordered regions lie at residues 514 to 540 (RILP…EQRE) and 734 to 754 (GHGE…YTSN). Positions 518–527 (QGTSQSTPRR) are enriched in polar residues. Over residues 528–540 (GSSDRQNRPEQRE) the composition is skewed to basic and acidic residues. Polar residues predominate over residues 741–754 (TSPSVSSAKSYTSN).

The protein belongs to the EXO84 family. In terms of assembly, the exocyst complex is composed of SEC3, SEC5, SEC6, SEC8, SEC10, EXO70A1 and EXO84.

In terms of biological role, component of the exocyst complex involved in the docking of exocytic vesicles with fusion sites on the plasma membrane during regulated or polarized secretion. Involved in polarized cell growth and organ morphogenesis. During cytokinesis, involved in cell plate initiation, cell plate maturation and formation of new primary cell wall. This is Exocyst complex component EXO84A (EXO84A) from Arabidopsis thaliana (Mouse-ear cress).